We begin with the raw amino-acid sequence, 151 residues long: MTTDTHTLHIEEILELLPHRYPFLLVDRVLDFEEGRFLRAVKNVSVNEPFFQGHFPGKPILPGVLILEAMAQATGILAFKSVGKLEPGELYYFAGIDEARFKRPVVPGDQMIMEVTFEKTRRGLTRFKGVALVDGKVVCEATMMCARSREA.

His-54 is a catalytic residue.

The protein belongs to the thioester dehydratase family. FabZ subfamily.

It is found in the cytoplasm. The catalysed reaction is a (3R)-hydroxyacyl-[ACP] = a (2E)-enoyl-[ACP] + H2O. Its function is as follows. Involved in unsaturated fatty acids biosynthesis. Catalyzes the dehydration of short chain beta-hydroxyacyl-ACPs and long chain saturated and unsaturated beta-hydroxyacyl-ACPs. This is 3-hydroxyacyl-[acyl-carrier-protein] dehydratase FabZ from Klebsiella pneumoniae (strain 342).